A 1509-amino-acid chain; its full sequence is Myosin-2 heavy chain, non muscle (1509 aa).

The Myosin N-terminal SH3-like domain occupies 32 to 85 (SDKTLAWWPTKDADRAFCHVEVTKDDGKNFTVRLENGEEKSQPKNEKNFLGVNP). A Myosin motor domain is found at 89 to 787 (DGVEDMGELG…QLAAIEELRE (699 aa)). The residue at position 133 (Lys-133) is an N6,N6,N6-trimethyllysine. Position 182–189 (182–189 (GESGAGKT)) interacts with ATP. Residues 623–643 (APAEEEKAAAGGSRNRSTGRG) are disordered. Actin-binding regions lie at residues 660–682 (LAHL…IPNL) and 766–780 (RFGV…GQLA). An IQ domain is found at 790–819 (ISKMVVSIQAGARAFLARRMYDKMREQTVS). Positions 848-1226 (LISQRNFQKE…AERDSGAQQR (379 aa)) are alpha-helical tailpiece (S2). A coiled-coil region spans residues 848-1509 (LISQRNFQKE…VRAGSARAEE (662 aa)). Basic and acidic residues-rich tracts occupy residues 958–1019 (ELKA…KDAL), 1034–1047 (KNTE…RNEL), 1097–1107 (EDARSEVDSLK), 1115–1141 (KSLK…RANV), and 1179–1189 (QVDETKRRLEE). Disordered regions lie at residues 958–1049 (ELKA…ELDD), 1068–1141 (LAQT…RANV), 1170–1195 (AAQA…ASAA), 1213–1259 (ADLD…RLEG), 1352–1425 (VAKE…NREL), and 1474–1509 (QLQD…RAEE). The tract at residues 1227–1252 (RKLNTRISELQSELENAPKTGGASSE) is hinge. Polar residues predominate over residues 1231–1240 (TRISELQSEL). The tract at residues 1253–1482 (EVKRLEGELE…AQLQDEIDGT (230 aa)) is alpha-helical tailpiece (LMM). A light meromyosin (LMM) region spans residues 1253-1509 (EVKRLEGELE…VRAGSARAEE (257 aa)). The segment at 1483-1509 (PSSRGGSTRGASARGASVRAGSARAEE) is nonhelical tailpiece. Positions 1484–1509 (SSRGGSTRGASARGASVRAGSARAEE) are enriched in low complexity. Ser-1489, Ser-1494, and Ser-1499 each carry phosphoserine.

This sequence belongs to the TRAFAC class myosin-kinesin ATPase superfamily. Myosin family. In terms of assembly, myosin II heavy chain is two-headed. It self-assembles into filaments. Hexamer of 2 heavy chain subunits (MHC), 2 alkali light chain subunits (MLC) and 2 regulatory light chain subunits (MLC-2).

Functionally, myosin is a protein that binds to F-actin and has ATPase activity that is activated by F-actin. This Acanthamoeba castellanii (Amoeba) protein is Myosin-2 heavy chain, non muscle.